A 678-amino-acid polypeptide reads, in one-letter code: Translation factor GUF1 homolog, chloroplastic (678 aa).

Residues 1-43 constitute a chloroplast transit peptide; the sequence is MASILLSLNTHTLLPLHTRTRTTKTTLKILRFSHKLPPSSPFY. The tr-type G domain maps to 81 to 262; the sequence is KNIRNFCIIA…AIVERVPPPR (182 aa). GTP contacts are provided by residues 90-97, 155-159, and 209-212; these read AHIDHGKS, DTPGH, and NKID.

Belongs to the TRAFAC class translation factor GTPase superfamily. Classic translation factor GTPase family. LepA subfamily.

Its subcellular location is the plastid. The protein resides in the chloroplast. It catalyses the reaction GTP + H2O = GDP + phosphate + H(+). Functionally, promotes chloroplast protein synthesis. May act as a fidelity factor of the translation reaction, by catalyzing a one-codon backward translocation of tRNAs on improperly translocated ribosomes. This is Translation factor GUF1 homolog, chloroplastic from Populus trichocarpa (Western balsam poplar).